The following is a 514-amino-acid chain: Membrane-bound lytic murein transglycosylase F (514 aa).

Positions 1-30 are cleaved as a signal peptide; it reads MKKLKINYLFIGILTLLLAAALWPSIPWFG. Residues 31-269 form a non-LT domain region; the sequence is KTENHIAAIQ…RIEEKYLGHG (239 aa). The LT domain stretch occupies residues 270-514; sequence DDFDYVDTRS…LFTPQKKEEK (245 aa). Glu314 is an active-site residue.

This sequence in the N-terminal section; belongs to the bacterial solute-binding protein 3 family. In the C-terminal section; belongs to the transglycosylase Slt family.

The protein localises to the cell outer membrane. The catalysed reaction is Exolytic cleavage of the (1-&gt;4)-beta-glycosidic linkage between N-acetylmuramic acid (MurNAc) and N-acetylglucosamine (GlcNAc) residues in peptidoglycan, from either the reducing or the non-reducing ends of the peptidoglycan chains, with concomitant formation of a 1,6-anhydrobond in the MurNAc residue.. Its function is as follows. Murein-degrading enzyme that degrades murein glycan strands and insoluble, high-molecular weight murein sacculi, with the concomitant formation of a 1,6-anhydromuramoyl product. Lytic transglycosylases (LTs) play an integral role in the metabolism of the peptidoglycan (PG) sacculus. Their lytic action creates space within the PG sacculus to allow for its expansion as well as for the insertion of various structures such as secretion systems and flagella. The protein is Membrane-bound lytic murein transglycosylase F of Salmonella choleraesuis (strain SC-B67).